Consider the following 523-residue polypeptide: ATP synthase subunit alpha (523 aa).

179 to 186 (GDRQTGKT) serves as a coordination point for ATP.

Belongs to the ATPase alpha/beta chains family. In terms of assembly, F-type ATPases have 2 components, CF(1) - the catalytic core - and CF(0) - the membrane proton channel. CF(1) has five subunits: alpha(3), beta(3), gamma(1), delta(1), epsilon(1). CF(0) has three main subunits: a(1), b(2) and c(9-12). The alpha and beta chains form an alternating ring which encloses part of the gamma chain. CF(1) is attached to CF(0) by a central stalk formed by the gamma and epsilon chains, while a peripheral stalk is formed by the delta and b chains.

Its subcellular location is the cell inner membrane. The catalysed reaction is ATP + H2O + 4 H(+)(in) = ADP + phosphate + 5 H(+)(out). In terms of biological role, produces ATP from ADP in the presence of a proton gradient across the membrane. The alpha chain is a regulatory subunit. This chain is ATP synthase subunit alpha, found in Vibrio vulnificus (strain YJ016).